The primary structure comprises 208 residues: Protein GrpE (208 aa).

Residues 1-12 (MTNKDESVEKNT) show a composition bias toward basic and acidic residues. The interval 1-59 (MTNKDESVEKNTESTVEETNIKQNIDDSVEQAEESKGHLQDEAIEETSDENVIEEIDPK) is disordered. The segment covering 13–23 (ESTVEETNIKQ) has biased composition (polar residues). The segment covering 42 to 55 (EAIEETSDENVIEE) has biased composition (acidic residues).

The protein belongs to the GrpE family. In terms of assembly, homodimer.

The protein localises to the cytoplasm. Its function is as follows. Participates actively in the response to hyperosmotic and heat shock by preventing the aggregation of stress-denatured proteins, in association with DnaK and GrpE. It is the nucleotide exchange factor for DnaK and may function as a thermosensor. Unfolded proteins bind initially to DnaJ; upon interaction with the DnaJ-bound protein, DnaK hydrolyzes its bound ATP, resulting in the formation of a stable complex. GrpE releases ADP from DnaK; ATP binding to DnaK triggers the release of the substrate protein, thus completing the reaction cycle. Several rounds of ATP-dependent interactions between DnaJ, DnaK and GrpE are required for fully efficient folding. The polypeptide is Protein GrpE (Staphylococcus aureus (strain Mu3 / ATCC 700698)).